Here is a 357-residue protein sequence, read N- to C-terminus: Fructose-bisphosphate aldolase, cytoplasmic isozyme 1 (357 aa).

Substrate is bound by residues arginine 52 and lysine 142. Residue glutamate 183 is the Proton acceptor of the active site. Lysine 225 (schiff-base intermediate with dihydroxyacetone-P) is an active-site residue.

This sequence belongs to the class I fructose-bisphosphate aldolase family.

Its subcellular location is the cytoplasm. The enzyme catalyses beta-D-fructose 1,6-bisphosphate = D-glyceraldehyde 3-phosphate + dihydroxyacetone phosphate. The protein operates within carbohydrate degradation; glycolysis; D-glyceraldehyde 3-phosphate and glycerone phosphate from D-glucose: step 4/4. In Pisum sativum (Garden pea), this protein is Fructose-bisphosphate aldolase, cytoplasmic isozyme 1.